An 888-amino-acid polypeptide reads, in one-letter code: MARRRSCQLHQVISLFTFAVGVNICLGVTANRIKRAEGWGEGPPTVLSDSPSINISGSCKGRCFELQEAGPPDCRCDNLCKSYSSCCLDFDELCLKTAGGWECTKDRCGEVRNEDHACHCSEDCLARGDCCTNYQVVCKGESHWVDDDCEEIKTPECPAGFVRPPLIIFSVDGFRASYMKKGSKVMPNIEKLRSCGTHSPYMRPVYPTKTFPNLYTLATGLYPESHGIVGNSMYDPVFDAHFNLRGREKFNHRWWGGQPLWITATKQGVIAGTFFWPVVIPHERRILTILQWLTLPDHERPSVYAFYSEQPDFSGHKYGPFGPEMTNPLRDIDKTVGQLMDGLKQLKLHRCVNVIFVGDHGMEDVTCDRTEFLSNYLTNVDDIILVPGTLGRIRPKFNNHAKYDPKVIIANLTCKKPDQHFKPYLKQHLPKRLHYANNRRIEDVHLLVERRWHVARKPLEVYKKPSGKCFFQGDHGFDNKVNSMQTVFVGYGPTFKYKTKVPPFENIELYNVMCDLLGLKPAPNNGTHGSLNHLLRTNTFRPTVPEEVTRPNYPGVMYLQSDFDLGCTCDDKAEPKNKLDELNKHLHIKESTEAETRKFRGSKNEIKENVNGNFEPRKERHLLYGRPAVLYRTRYDILYHTDFESGYSEIFLMPLWTSYTVSKQADVSDIPAHLTNCVRPDVRVSPSFSQSCLAYKNDKQMSYGFLFPPYLSSSPEAKYDAFLVTNMVPMYPAFKRIWNYFQRVLVKKYASERNGVNVISGPIFDYDYDGLHDTQDKIKQYVEGSSVPVPTHYYSILTSCLDFTQPADRCDGPLSVSAFVLPHRPDNDESCNSSEDESKWVEELLKMHTARVRDIEHLTSLDFFRKTSRSYPEILTLKTYLQTYESEI.

The signal sequence occupies residues 1–27; the sequence is MARRRSCQLHQVISLFTFAVGVNICLG. Residues 28 to 35 constitute a propeptide, removed by furin; sequence VTANRIKR. A glycan (N-linked (GlcNAc...) asparagine) is linked at Asn54. 2 consecutive SMB domains span residues 55 to 98 and 99 to 143; these read ISGS…LKTA and GGWE…GESH. 10 cysteine pairs are disulfide-bonded: Cys59–Cys76, Cys63–Cys94, Cys74–Cys87, Cys80–Cys86, Cys103–Cys120, Cys108–Cys138, Cys118–Cys131, Cys124–Cys130, Cys149–Cys195, and Cys157–Cys351. Positions 127 to 129 match the Cell attachment site motif; it reads RGD. The segment at 145-502 is phosphodiesterase; the sequence is VDDDCEEIKT…PTFKYKTKVP (358 aa). Zn(2+) contacts are provided by Asp172 and Thr210. Thr210 (nucleophile) is an active-site residue. Positions 210, 231, and 312 each coordinate 1-(9Z-octadecenoyl)-sn-glycero-3-phosphate. 3 residues coordinate 1-hexadecanoyl-sn-glycero-3-phosphate: Thr210, Asn231, and Asp312. 1-tetradecanoyl-sn-glycerol 3-phosphate contacts are provided by Thr210, Asn231, and Asp312. Asp312, His316, Asp359, and His360 together coordinate Zn(2+). 5 cysteine pairs are disulfide-bonded: Cys367–Cys469, Cys414–Cys831, Cys567–Cys692, Cys569–Cys677, and Cys800–Cys810. Asn411 carries N-linked (GlcNAc...) asparagine glycosylation. His475 is a binding site for Zn(2+). Position 475 (His475) interacts with 1-(9Z-octadecenoyl)-sn-glycero-3-phosphate. His475 lines the 1-hexadecanoyl-sn-glycero-3-phosphate pocket. A 1-tetradecanoyl-sn-glycerol 3-phosphate-binding site is contributed by His475. The N-linked (GlcNAc...) asparagine glycan is linked to Asn525. Residues 623 to 888 form a nuclease-like domain region; the sequence is LYGRPAVLYR…TYLQTYESEI (266 aa). Ca(2+) contacts are provided by Asp765, Asp767, Asp769, Leu771, and Asp773. N-linked (GlcNAc...) asparagine glycosylation occurs at Asn832. The tract at residues 855-876 is required for secretion; it reads IEHLTSLDFFRKTSRSYPEILT.

Belongs to the nucleotide pyrophosphatase/phosphodiesterase family. It depends on Zn(2+) as a cofactor. Requires Ca(2+) as cofactor. N-glycosylation, but not furin-cleavage, plays a critical role on secretion and on lysoPLD activity. Post-translationally, the interdomain disulfide bond between Cys-414 and Cys-831 is essential for catalytic activity. In terms of tissue distribution, detected in fetal serum (at protein level).

It is found in the secreted. The enzyme catalyses a 1-O-alkyl-sn-glycero-3-phosphoethanolamine + H2O = a 1-O-alkyl-sn-glycero-3-phosphate + ethanolamine + H(+). It catalyses the reaction a 1-acyl-sn-glycero-3-phosphoethanolamine + H2O = a 1-acyl-sn-glycero-3-phosphate + ethanolamine + H(+). It carries out the reaction 1-(9Z-octadecenoyl)-sn-glycero-3-phosphoethanolamine + H2O = 1-(9Z-octadecenoyl)-sn-glycero-3-phosphate + ethanolamine + H(+). The catalysed reaction is a 1-O-alkyl-sn-glycero-3-phosphocholine + H2O = a 1-O-alkyl-sn-glycero-3-phosphate + choline + H(+). The enzyme catalyses 1-O-(9Z-octadecenyl)-sn-glycero-3-phosphocholine + H2O = 1-O-(9Z-octadecenyl)-sn-glycero-3-phosphate + choline + H(+). It catalyses the reaction 1-O-hexadecyl-sn-glycero-3-phosphocholine + H2O = 1-O-hexadecyl-sn-glycero-3-phosphate + choline + H(+). It carries out the reaction a 1-O-(1Z-alkenyl)-sn-glycero-3-phosphocholine + H2O = a 1-O-(1Z-alkenyl)-sn-glycero-3-phosphate + choline + H(+). The catalysed reaction is a 1-acyl-sn-glycero-3-phosphocholine + H2O = a 1-acyl-sn-glycero-3-phosphate + choline + H(+). The enzyme catalyses 1-dodecanoyl-sn-glycero-3-phosphocholine + H2O = 1-dodecanoyl-sn-glycerol 3-phosphate + choline + H(+). It catalyses the reaction 1-(9Z-octadecenoyl)-sn-glycero-3-phosphocholine + H2O = 1-(9Z-octadecenoyl)-sn-glycero-3-phosphate + choline + H(+). It carries out the reaction 1-tetradecanoyl-sn-glycero-3-phosphocholine + H2O = 1-tetradecanoyl-sn-glycerol 3-phosphate + choline + H(+). The catalysed reaction is 1-decanoyl-sn-glycero-3-phosphocholine + H2O = 1-decanoyl-sn-glycero-3-phosphate + choline + H(+). The enzyme catalyses 1-octadecanoyl-sn-glycero-3-phosphocholine + H2O = 1-octadecanoyl-sn-glycero-3-phosphate + choline + H(+). It catalyses the reaction 1-hexadecanoyl-sn-glycero-3-phosphocholine + H2O = 1-hexadecanoyl-sn-glycero-3-phosphate + choline + H(+). It carries out the reaction 1-hexanoyl-sn-glycero-3-phosphocholine + H2O = 1-hexanoyl-sn-glycero-3-phosphate + choline + H(+). The catalysed reaction is 1-(9Z,12Z)-octadecadienoyl-sn-glycero-3-phosphocholine + H2O = 1-(9Z,12Z)-octadecadienoyl-sn-glycero-3-phosphate + choline + H(+). The enzyme catalyses sphing-4-enine-phosphocholine + H2O = sphing-4-enine 1-phosphate + choline + H(+). It catalyses the reaction 1-(5Z,8Z,11Z,14Z-eicosatetraenoyl)-sn-glycero-3-phosphocholine + H2O = 1-(5Z,8Z,11Z,14Z-eicosatetraenoyl)-sn-glycero-3-phosphate + choline + H(+). It carries out the reaction a 2-acyl-sn-glycero-3-phosphocholine + H2O = a 2-acyl-sn-glycerol 3-phosphate + choline + H(+). The catalysed reaction is a 1,2-diacyl-sn-glycero-3-phosphocholine + H2O = a 1,2-diacyl-sn-glycero-3-phosphate + choline + H(+). The enzyme catalyses 1,2-dioctanoyl-sn-glycero-3-phosphocholine + H2O = 1,2-dioctanoyl-sn-glycero-3-phosphate + choline + H(+). It catalyses the reaction 1,2-didecanoyl-sn-glycero-3-phosphocholine + H2O = 1,2-didecanoyl-sn-glycero-3-phosphate + choline + H(+). It carries out the reaction a 1-acyl-sn-glycero-3-phospho-L-serine + H2O = a 1-acyl-sn-glycero-3-phosphate + L-serine + H(+). The catalysed reaction is 1-(9Z-octadecenoyl)-sn-glycero-3-phospho-L-serine + H2O = 1-(9Z-octadecenoyl)-sn-glycero-3-phosphate + L-serine + H(+). The enzyme catalyses a 2-acyl-sn-glycero-3-phospho-L-serine + H2O = a 2-acyl-sn-glycerol 3-phosphate + L-serine + H(+). Its function is as follows. Secreted lysophospholipase D that hydrolyzes lysophospholipids to produce the signaling molecule lysophosphatidic acid (LPA) in extracellular fluids. Its major substrate is lysophosphatidylcholine. Can also act on sphingosylphosphorylcholine producing sphingosine-1-phosphate, a modulator of cell motility. Can hydrolyze, in vitro, bis-pNPP, to some extent pNP-TMP, and barely ATP. Involved in several motility-related processes such as angiogenesis and neurite outgrowth. Acts as an angiogenic factor by stimulating migration of smooth muscle cells and microtubule formation. Stimulates migration of melanoma cells, probably via a pertussis toxin-sensitive G protein. May have a role in induction of parturition. Possible involvement in cell proliferation and adipose tissue development. Required for LPA production in activated platelets, cleaves the sn-1 lysophospholipids to generate sn-1 lysophosphatidic acids containing predominantly 18:2 and 20:4 fatty acids. Shows a preference for the sn-1 to the sn-2 isomer of 1-O-alkyl-sn-glycero-3-phosphocholine (lyso-PAF). The sequence is that of Autotaxin from Bos taurus (Bovine).